A 796-amino-acid polypeptide reads, in one-letter code: Kinesin-like protein KIF3C (796 aa).

The Kinesin motor domain occupies 10–367 (ALKVVARCRP…LRFANRAKNI (358 aa)). ATP is bound at residue 97–104 (GQTGTGKT). 3 disordered regions span residues 251-292 (ERQN…PKEA), 397-421 (EKKG…SAPA), and 754-796 (PSTS…VDHD). Positions 270–284 (AGGGGGGGGTSGSGS) are enriched in gly residues. Residues 378 to 632 (KDTLLREFQE…NEQTRELKLK (255 aa)) adopt a coiled-coil conformation. Positions 401–416 (MLGKRPRRKSSRRKKA) are enriched in basic residues. Residues 633-793 (YLIIENFIPP…SAPLHPATVV (161 aa)) form a globular region.

Belongs to the TRAFAC class myosin-kinesin ATPase superfamily. Kinesin family. Kinesin II subfamily. As to quaternary structure, heterodimer of KIF3A and KIF3C.

It is found in the cytoplasm. It localises to the cytoskeleton. Microtubule-based anterograde translocator for membranous organelles. This is Kinesin-like protein KIF3C (Kif3c) from Rattus norvegicus (Rat).